Here is a 434-residue protein sequence, read N- to C-terminus: Putative ankyrin repeat protein FPV023 (434 aa).

7 ANK repeats span residues 33–62 (RLKI…DPVA), 134–163 (LTIS…DINF), 167–197 (IGNT…DINI), 201–230 (YGTT…DPNS), 236–265 (IGTK…DPNI), 269–299 (AGVT…DPNI), and 303–330 (NGTT…DINI).

The polypeptide is Putative ankyrin repeat protein FPV023 (Fowlpox virus (strain NVSL) (FPV)).